Reading from the N-terminus, the 200-residue chain is MSYDKKADVTSLDEDLRQLRESKFSPEAIQNIKIWVYKSVLKEIAPPGDLLECLKDGTVLCKLANILYEADTGEANHISWKSSKMPFVQMDQISQFLSFSRKYGVPEDELFQTIDLFEKKDPAIVFQTLKSLSRYANKKHTDRFPVLGPQLSTKKPRPPVKSKPKHLQDGTGWSTFEYGYMKGASQATEGVVLGQRRDIV.

Ser2 is subject to N-acetylserine. Ser11 bears the Phosphoserine mark. One can recognise a Calponin-homology (CH) domain in the interval 26–136 (PEAIQNIKIW…QTLKSLSRYA (111 aa)). A disordered region spans residues 144–168 (FPVLGPQLSTKKPRPPVKSKPKHLQ). The tract at residues 151–164 (LSTKKPRPPVKSKP) is interaction with SH3 domain of ABP1. Positions 154–165 (KKPRPPVKSKPK) are enriched in basic residues.

As to quaternary structure, binds to actin. Interacts with ABP1.

Its subcellular location is the cytoplasm. The protein localises to the cytoskeleton. It localises to the actin patch. Its function is as follows. Has actin-binding and actin-bundling activity. Stabilizes actin filaments against disassembly. This Saccharomyces cerevisiae (strain ATCC 204508 / S288c) (Baker's yeast) protein is Transgelin (SCP1).